Consider the following 81-residue polypeptide: Protein translocase subunit SecE (81 aa).

A helical membrane pass occupies residues 50-70 (VAVILMVILVSTVIYFVDQIF).

The protein belongs to the SecE/SEC61-gamma family. In terms of assembly, component of the Sec protein translocase complex. Heterotrimer consisting of SecY, SecE and SecG subunits. The heterotrimers can form oligomers, although 1 heterotrimer is thought to be able to translocate proteins. Interacts with the ribosome. Interacts with SecDF, and other proteins may be involved. Interacts with SecA.

It localises to the cell inner membrane. The protein localises to the cellular thylakoid membrane. In terms of biological role, essential subunit of the Sec protein translocation channel SecYEG. Clamps together the 2 halves of SecY. May contact the channel plug during translocation. The sequence is that of Protein translocase subunit SecE from Synechocystis sp. (strain ATCC 27184 / PCC 6803 / Kazusa).